A 365-amino-acid chain; its full sequence is Chorismate synthase (365 aa).

Arg46 is an NADP(+) binding site. FMN contacts are provided by residues 123-125 (RSS), 241-242 (NG), Gly281, 296-300 (KPTPS), and Arg322.

Belongs to the chorismate synthase family. As to quaternary structure, homotetramer. Requires FMNH2 as cofactor.

The catalysed reaction is 5-O-(1-carboxyvinyl)-3-phosphoshikimate = chorismate + phosphate. The protein operates within metabolic intermediate biosynthesis; chorismate biosynthesis; chorismate from D-erythrose 4-phosphate and phosphoenolpyruvate: step 7/7. Catalyzes the anti-1,4-elimination of the C-3 phosphate and the C-6 proR hydrogen from 5-enolpyruvylshikimate-3-phosphate (EPSP) to yield chorismate, which is the branch point compound that serves as the starting substrate for the three terminal pathways of aromatic amino acid biosynthesis. This reaction introduces a second double bond into the aromatic ring system. This is Chorismate synthase from Helicobacter pylori (strain J99 / ATCC 700824) (Campylobacter pylori J99).